We begin with the raw amino-acid sequence, 179 residues long: MKVLFKLPPSLRSELKKPVGELIEGDIPTPYLKVKDILTNEDPLVTVGDVVTENIMKVGLNPNLAIYDHKTERREYKPNIRSVEGVLITVKNPPGTITLPLLKAIKKAYSLLSHGKRVHIVVDGEEDLATIPAVLYAPIGTTVIYGQPKKGIVLIKVTNECKRRCAKIMRRMEVVRNGD.

The GTP site is built by Asp49, Val50, Val51, Asp68, Lys70, and Glu126.

The protein belongs to the GTP-dependent DPCK family.

It carries out the reaction 3'-dephospho-CoA + GTP = GDP + CoA + H(+). It participates in cofactor biosynthesis; coenzyme A biosynthesis. Functionally, catalyzes the GTP-dependent phosphorylation of the 3'-hydroxyl group of dephosphocoenzyme A to form coenzyme A (CoA). The sequence is that of GTP-dependent dephospho-CoA kinase from Pyrococcus abyssi (strain GE5 / Orsay).